A 52-amino-acid chain; its full sequence is MVSCFDFFLSLNFGKMAKRFVWRTDKPQADLPQTPNSQVRIVSRDLPRGGNY.

Positions 27 to 52 are disordered; it reads PQADLPQTPNSQVRIVSRDLPRGGNY. Positions 31 to 40 are enriched in polar residues; sequence LPQTPNSQVR. Residues 42 to 52 show a composition bias toward basic and acidic residues; that stretch reads VSRDLPRGGNY.

In terms of tissue distribution, expressed in roots. Barely detected in flowers.

Its function is as follows. Produces a rapid alkalinization of the cellular media and the induction of defense-related genes, including chitinase 1b, chalcone synthase and CYP93A1. Not active in tobacco or Arabidopsis. The receptor for GmPep890 is probably different from the receptor for GmSubPep. This is Protein PROPEP890 (PROPEP890) from Glycine max (Soybean).